The following is a 1887-amino-acid chain: ATP-dependent DNA helicase tlh1 (1887 aa).

Over residues 329 to 347 (NQQRREQQDKGENKKRQDD) the composition is skewed to basic and acidic residues. Disordered stretches follow at residues 329 to 372 (NQQR…EEEE), 504 to 552 (ERKE…NTDD), and 1110 to 1135 (MVEG…EMTQ). Acidic residues-rich tracts occupy residues 360-372 (LEDD…EEEE) and 524-533 (SAEDDNDNDN). Residues 540-549 (NNNNNNNNTN) are compositionally biased toward low complexity. Over residues 1112–1131 (EGDKEKDKTNEEKNKDEVKA) the composition is skewed to basic and acidic residues. The Helicase ATP-binding domain occupies 1200–1375 (YFSLLNRMNL…RQTFCTNFYV (176 aa)). Residues 1213-1220 (LPTGGGKS) and 1240-1247 (MNMVTLVL) each bind ATP. The DEAH box signature appears at 1322–1325 (DEAH). In terms of domain architecture, Helicase C-terminal spans 1401–1559 (DLRTLMKRTK…CVRSFLASEM (159 aa)). The disordered stretch occupies residues 1613–1643 (YNASFSSSPPPQPGNSSGMSAMNTNTTSTTP). A compositionally biased stretch (low complexity) spans 1626–1642 (GNSSGMSAMNTNTTSTT). The segment at 1804-1821 (STCYKCGKADHNLRECKL) adopts a CCHC-type zinc-finger fold.

This sequence belongs to the helicase family. RecQ subfamily.

It carries out the reaction Couples ATP hydrolysis with the unwinding of duplex DNA by translocating in the 3'-5' direction.. The enzyme catalyses ATP + H2O = ADP + phosphate + H(+). A probable ATP-dependent 3'-5' DNA helicase. Has a role in telomerase-independent telomere maintenance. This Schizosaccharomyces pombe (strain 972 / ATCC 24843) (Fission yeast) protein is ATP-dependent DNA helicase tlh1.